A 149-amino-acid chain; its full sequence is Down syndrome critical region protein 9 (149 aa).

The segment at 1-41 (MGRICPVNSRARRLRARPGRPSGDSLPYHQLQGGAPRLWSP) is disordered.

Testis specific.

This Homo sapiens (Human) protein is Down syndrome critical region protein 9 (DSCR9).